The chain runs to 163 residues: S-fimbrial adhesin protein SfaS (163 aa).

Residues methionine 1–alanine 22 form the signal peptide. The cysteines at positions 38 and 75 are disulfide-linked. Residues lysine 138–lysine 144 are involved in sialic acid binding.

Belongs to the fimbrial protein family.

The protein resides in the fimbrium. In terms of biological role, fimbriae (also called pili), polar filaments radiating from the surface of the bacterium to a length of 0.5-1.5 micrometers and numbering 100-300 per cell, enable bacteria to colonize the epithelium of specific host organs. A minor fimbrial subunit, this protein is necessary for full expression of S-specific binding. S-fimbrial adhesins enable pathogenic E.coli causing urinary-tract infections or newborn meningitis to attach to glycoproteins terminating with alpha-sialic acid-(2-3)-beta-Gal. This protein binds to the alpha-sialic acid-(2-3)-beta-Gal and is thus responsible for erythrocyte recognition and hemagglutination. This Escherichia coli O6:K15:H31 (strain 536 / UPEC) protein is S-fimbrial adhesin protein SfaS (sfaS).